An 82-amino-acid chain; its full sequence is Cytochrome b559 subunit alpha (82 aa).

The helical transmembrane segment at 22–36 (VIHFVTLPSIFLAGF) threads the bilayer. His-24 contributes to the heme binding site.

The protein belongs to the PsbE/PsbF family. Heterodimer of an alpha subunit and a beta subunit. PSII is composed of 1 copy each of membrane proteins PsbA, PsbB, PsbC, PsbD, PsbE, PsbF, PsbH, PsbI, PsbJ, PsbK, PsbL, PsbM, PsbT, PsbX, PsbY, PsbZ, Psb30/Ycf12, peripheral proteins PsbO, CyanoQ (PsbQ), PsbU, PsbV and a large number of cofactors. It forms dimeric complexes. Heme b is required as a cofactor.

It is found in the cellular thylakoid membrane. Its function is as follows. This b-type cytochrome is tightly associated with the reaction center of photosystem II (PSII). PSII is a light-driven water:plastoquinone oxidoreductase that uses light energy to abstract electrons from H(2)O, generating O(2) and a proton gradient subsequently used for ATP formation. It consists of a core antenna complex that captures photons, and an electron transfer chain that converts photonic excitation into a charge separation. The protein is Cytochrome b559 subunit alpha of Parasynechococcus marenigrum (strain WH8102).